The primary structure comprises 242 residues: ATP-dependent dethiobiotin synthetase BioD 1 (242 aa).

An ATP-binding site is contributed by 12 to 17 (NVGKTT). Thr-16 provides a ligand contact to Mg(2+). Lys-37 is an active-site residue. Position 66 (Asp-66) interacts with ATP. Residues Asp-66 and Glu-124 each coordinate Mg(2+). ATP-binding positions include 184–185 (NR), 213–215 (PYL), and Glu-220.

Belongs to the dethiobiotin synthetase family. In terms of assembly, homodimer. Mg(2+) serves as cofactor.

It localises to the cytoplasm. The enzyme catalyses (7R,8S)-7,8-diammoniononanoate + CO2 + ATP = (4R,5S)-dethiobiotin + ADP + phosphate + 3 H(+). Its pathway is cofactor biosynthesis; biotin biosynthesis; biotin from 7,8-diaminononanoate: step 1/2. Its function is as follows. Catalyzes a mechanistically unusual reaction, the ATP-dependent insertion of CO2 between the N7 and N8 nitrogen atoms of 7,8-diaminopelargonic acid (DAPA, also called 7,8-diammoniononanoate) to form a ureido ring. The chain is ATP-dependent dethiobiotin synthetase BioD 1 from Haemophilus influenzae (strain ATCC 51907 / DSM 11121 / KW20 / Rd).